Here is a 300-residue protein sequence, read N- to C-terminus: C-5 sterol desaturase (300 aa).

Helical transmembrane passes span 3-23, 68-88, 91-111, and 147-167; these read DPVL…WTAA, SLAL…QLSA, WYTW…YHRI, and ILMW…FCSW. In terms of domain architecture, Fatty acid hydroxylase spans 94–227; sequence WVIAIVGVDL…LIIWDRLFGS (134 aa).

Belongs to the sterol desaturase family.

The protein localises to the cell membrane. The polypeptide is C-5 sterol desaturase (erg3) (Mycobacterium bovis (strain ATCC BAA-935 / AF2122/97)).